The chain runs to 2604 residues: Probable polyketide synthase 17 (2604 aa).

One can recognise a Ketosynthase family 3 (KS3) domain in the interval 11–433 (NDDIAIIGMG…GSNCHMILSE (423 aa)). Catalysis depends on for beta-ketoacyl synthase activity residues Cys-179, His-316, and His-356. Residues 631–664 (GISPSIVVGHSFGEIPSALFSDVISLETAVKIVY) are acyl/malonyl transferases. The active-site For acyl/malonyl transferase activity is Ser-641. Residues 937-1057 (NNLLGHDQFA…GRIGLFKHNP (121 aa)) are N-terminal hotdog fold. Residues 937–1216 (NNLLGHDQFA…CTSLIRLKKQ (280 aa)) enclose the PKS/mFAS DH domain. The active-site Proton acceptor; for dehydratase activity is His-968. The segment at 1072-1216 (SFTTLTKSEV…CTSLIRLKKQ (145 aa)) is C-terminal hotdog fold. Asp-1132 serves as the catalytic Proton donor; for dehydratase activity. Residues 1357 to 1407 (GESEHFSPSNPSSPNDTPRNNSNNCSSKNNAASSDDADDDTNNEETINQLN) form a disordered region. Residues 1363 to 1390 (SPSNPSSPNDTPRNNSNNCSSKNNAASS) show a composition bias toward low complexity. Residues 2507–2584 (GDSGSTQAKV…SIIQRISSKS (78 aa)) form the Carrier domain. Ser-2544 carries the O-(pantetheine 4'-phosphoryl)serine modification. The span at 2581 to 2597 (SSKSTSTSTPNPTNTSK) shows a compositional bias: low complexity. Residues 2581 to 2604 (SSKSTSTSTPNPTNTSKQTATKKT) are disordered.

Requires pantetheine 4'-phosphate as cofactor.

Probable polyketide synthase. This Dictyostelium discoideum (Social amoeba) protein is Probable polyketide synthase 17 (pks17).